A 308-amino-acid polypeptide reads, in one-letter code: Probable 5-dehydro-4-deoxyglucarate dehydratase (308 aa).

Belongs to the DapA family.

It catalyses the reaction 5-dehydro-4-deoxy-D-glucarate + H(+) = 2,5-dioxopentanoate + CO2 + H2O. It functions in the pathway carbohydrate acid metabolism; D-glucarate degradation; 2,5-dioxopentanoate from D-glucarate: step 2/2. The sequence is that of Probable 5-dehydro-4-deoxyglucarate dehydratase from Oceanobacillus iheyensis (strain DSM 14371 / CIP 107618 / JCM 11309 / KCTC 3954 / HTE831).